A 445-amino-acid chain; its full sequence is Phosphoglucosamine mutase (445 aa).

The Phosphoserine intermediate role is filled by Ser-102. Positions 102, 241, 243, and 245 each coordinate Mg(2+). Residue Ser-102 is modified to Phosphoserine.

It belongs to the phosphohexose mutase family. Requires Mg(2+) as cofactor. Activated by phosphorylation.

The enzyme catalyses alpha-D-glucosamine 1-phosphate = D-glucosamine 6-phosphate. Functionally, catalyzes the conversion of glucosamine-6-phosphate to glucosamine-1-phosphate. The protein is Phosphoglucosamine mutase of Cronobacter sakazakii (strain ATCC BAA-894) (Enterobacter sakazakii).